The chain runs to 175 residues: MTWRERAEKLLIGISGMPGVGKTTLVLRVLELARSKYRCCGFVTVEVRERGVRIGFDTIDVVSGARVPLARVGTGSPSVGKYVVNLPSCEVISRALRQEDCEVAFIDEIGAMEFKCPTFYTDLRVAVDRIPRIIATVHRNYIHTAEKLGFEIIWLTRENWNSTLSTVLKALSLST.

ATP is bound by residues G16 to T23 and V103 to G110.

This sequence belongs to the THEP1 NTPase family.

The catalysed reaction is a ribonucleoside 5'-triphosphate + H2O = a ribonucleoside 5'-diphosphate + phosphate + H(+). Its function is as follows. Has nucleotide phosphatase activity towards ATP, GTP, CTP, TTP and UTP. May hydrolyze nucleoside diphosphates with lower efficiency. The polypeptide is Nucleoside-triphosphatase THEP1 (Pyrobaculum calidifontis (strain DSM 21063 / JCM 11548 / VA1)).